The sequence spans 184 residues: Ribosome-recycling factor (184 aa).

This sequence belongs to the RRF family.

It is found in the cytoplasm. Responsible for the release of ribosomes from messenger RNA at the termination of protein biosynthesis. May increase the efficiency of translation by recycling ribosomes from one round of translation to another. The protein is Ribosome-recycling factor of Leptospira interrogans serogroup Icterohaemorrhagiae serovar copenhageni (strain Fiocruz L1-130).